Reading from the N-terminus, the 504-residue chain is Deoxyguanosinetriphosphate triphosphohydrolase (504 aa).

Residues 66 to 273 form the HD domain; the sequence is RLTHSLEVQQ…MEAADDISYC (208 aa).

The protein belongs to the dGTPase family. Type 1 subfamily. As to quaternary structure, homotetramer. It depends on Mg(2+) as a cofactor.

The catalysed reaction is dGTP + H2O = 2'-deoxyguanosine + triphosphate + H(+). Functionally, dGTPase preferentially hydrolyzes dGTP over the other canonical NTPs. The polypeptide is Deoxyguanosinetriphosphate triphosphohydrolase (Klebsiella pneumoniae (strain 342)).